The chain runs to 549 residues: Cytoplasmic trehalase (549 aa).

Substrate contacts are provided by residues R168, W175 to D176, N212, R221 to Q223, R292 to E294, and G324. Catalysis depends on proton donor/acceptor residues D326 and E509. Residue E525 coordinates substrate.

Belongs to the glycosyl hydrolase 37 family. In terms of assembly, monomer.

It is found in the cytoplasm. The catalysed reaction is alpha,alpha-trehalose + H2O = alpha-D-glucose + beta-D-glucose. It participates in glycan degradation; trehalose degradation; D-glucose from alpha,alpha-trehalose: step 1/1. Functionally, hydrolyzes trehalose to glucose. Could be involved, in cells returning to low osmolarity conditions, in the utilization of the accumulated cytoplasmic trehalose, which was synthesized in response to high osmolarity. The polypeptide is Cytoplasmic trehalase (Shigella flexneri serotype 5b (strain 8401)).